A 394-amino-acid chain; its full sequence is MAPAMEEIRQAQRAEGPAAVLAIGTSTPPNALYQADYPDYYFRITKSEHLTELKEKFKRMCDKSMIKKRYMYLTEEILKENPNICAFMAPSLDARQDIVVTEVPKLAKEAAVRAIKEWGHPKSRITHLIFCTTSGIDMPGADYQLTRLLGLRPSVNRFMLYQQGCFAGGTVLRLAKDLAENNAGARVLVVCSEITAVTFRGPSESHLDSLVGQALFGDGAAAIIVGSDPDSATERPLFQLVSASQTILPESEGAIDGHLREIGLTFHLLKDVPGLISKNIQKCLLDAFKPLGVHDWNSIFWIAHPGGPAILDQVEIKLGLKAEKLAASRSVLAEYGNMSSACVLFILDEMRRRSAEAGQATTGEGLEWGVLFGFGPGLTVETIVLRSVPIAGAE.

Residue cysteine 165 is part of the active site.

It belongs to the thiolase-like superfamily. Chalcone/stilbene synthases family.

It catalyses the reaction (E)-4-coumaroyl-CoA + 3 malonyl-CoA + 3 H(+) = 2',4,4',6'-tetrahydroxychalcone + 3 CO2 + 4 CoA. Its pathway is secondary metabolite biosynthesis; flavonoid biosynthesis. The primary product of this enzyme is 4,2',4',6'-tetrahydroxychalcone (also termed naringenin-chalcone or chalcone) which can under specific conditions spontaneously isomerize into naringenin. The polypeptide is Chalcone synthase 4 (CHS4) (Bromheadia finlaysoniana (Orchid)).